A 386-amino-acid chain; its full sequence is MYVRHLALTDFRSWARVELELEPGRTVFVGSNGFGKTNLIEALWYSATLGSHRVASDAPLIRAGAERAVVSTIVVNDGRELAVDLDITSGRANKARLNRSPVRSAREILGVLRAVLFAPEDLALVRGDPGERRRYLDELATTRRPRIAAVRADYDKVVRQRTALLKTASGARYRGDRGALETLDVWNGHLASHGAQLISARVQLVNELAPEVEKAYQLLAPGSRPAAIRYRSGVDVVEAEAAAGNSDEEMFEAALLDALSRRRDAELERGVCLVGPHRDDLELRLGDQVAKGFASHGESWSMALALRLAAYELLRVEGSDPVLLLDDVFAELDSARRQALAQVAATAEQVLVTAAVEEDIPAEWDARRIGITMQDSDGGRISVVRT.

Residue 30 to 37 coordinates ATP; it reads GSNGFGKT.

It belongs to the RecF family.

The protein localises to the cytoplasm. Its function is as follows. The RecF protein is involved in DNA metabolism; it is required for DNA replication and normal SOS inducibility. RecF binds preferentially to single-stranded, linear DNA. It also seems to bind ATP. The chain is DNA replication and repair protein RecF from Mycolicibacterium vanbaalenii (strain DSM 7251 / JCM 13017 / BCRC 16820 / KCTC 9966 / NRRL B-24157 / PYR-1) (Mycobacterium vanbaalenii).